Consider the following 760-residue polypeptide: Transferrin receptor protein 1 (760 aa).

The Cytoplasmic portion of the chain corresponds to 1–67 (MMDQARSAFS…KPKRCSGSIC (67 aa)). The interval 1–67 (MMDQARSAFS…KPKRCSGSIC (67 aa)) is mediates interaction with SH3BP4. Phosphoserine is present on residues Ser10 and Ser19. At Tyr20 the chain carries Phosphotyrosine. Positions 20–23 (YTRF) match the Endocytosis signal motif. Thr21 is modified (phosphothreonine). Position 24 is a phosphoserine (Ser24). The Stop-transfer sequence motif lies at 58-61 (KPKR). S-palmitoyl cysteine attachment occurs at residues Cys62 and Cys67. A helical; Signal-anchor for type II membrane protein transmembrane segment spans residues 68–88 (YGTIAVIVFFLIGFMIGYLGY). Residues 89 to 760 (CKGVEPKTEC…GDVWDIDNEF (672 aa)) lie on the Extracellular side of the membrane. Thr104 is a glycosylation site (O-linked (GalNAc...) threonine). Positions 223–313 (SKAATVTGKL…GTGDPYTPGF (91 aa)) constitute a PA domain. N-linked (GlcNAc...) asparagine glycosylation is found at Asn251 and Asn317. Positions 569-760 (TMDTYKELIE…GDVWDIDNEF (192 aa)) are ligand-binding. The Cell attachment site; required for binding to transferrin motif lies at 646–648 (RGD). N-linked (GlcNAc...) asparagine glycosylation occurs at Asn727.

It belongs to the peptidase M28 family. M28B subfamily. Homodimer; disulfide-linked. Binds one transferrin or HFE molecule per subunit. Binds the HLA class II histocompatibility antigen, DR1. Interacts with SH3BP3. Interacts with STEAP3; facilitates TFRC endocytosis in erythroid precursor cells. Interacts with GRM2. As to quaternary structure, (Microbial infection) Interacts with Guanarito, Junin and Machupo arenavirus glycoprotein complex. In terms of assembly, (Microbial infection) Interacts with rabies virus protein G. (Microbial infection) Interacts with SARS-CoV-2 spike protein S. In terms of processing, stearoylated by ZDHHC6 which inhibits TFRC-mediated activation of the JNK pathway and promotes mitochondrial fragmentation. Stearoylation does not affect iron uptake. Post-translationally, N- and O-glycosylated, phosphorylated and palmitoylated. The serum form is only glycosylated. Proteolytically cleaved on Arg-100 to produce the soluble serum form (sTfR). In terms of processing, palmitoylated on both Cys-62 and Cys-67. Cys-62 seems to be the major site of palmitoylation.

It localises to the cell membrane. The protein localises to the melanosome. Its subcellular location is the secreted. Functionally, cellular uptake of iron occurs via receptor-mediated endocytosis of ligand-occupied transferrin receptor into specialized endosomes. Endosomal acidification leads to iron release. The apotransferrin-receptor complex is then recycled to the cell surface with a return to neutral pH and the concomitant loss of affinity of apotransferrin for its receptor. Transferrin receptor is necessary for development of erythrocytes and the nervous system. A second ligand, the hereditary hemochromatosis protein HFE, competes for binding with transferrin for an overlapping C-terminal binding site. Positively regulates T and B cell proliferation through iron uptake. Acts as a lipid sensor that regulates mitochondrial fusion by regulating activation of the JNK pathway. When dietary levels of stearate (C18:0) are low, promotes activation of the JNK pathway, resulting in HUWE1-mediated ubiquitination and subsequent degradation of the mitofusin MFN2 and inhibition of mitochondrial fusion. When dietary levels of stearate (C18:0) are high, TFRC stearoylation inhibits activation of the JNK pathway and thus degradation of the mitofusin MFN2. Mediates uptake of NICOL1 into fibroblasts where it may regulate extracellular matrix production. (Microbial infection) Acts as a receptor for new-world arenaviruses: Guanarito, Junin and Machupo virus. Its function is as follows. (Microbial infection) Acts as a host entry factor for rabies virus that hijacks the endocytosis of TFRC to enter cells. In terms of biological role, (Microbial infection) Acts as a host entry factor for SARS-CoV, MERS-CoV and SARS-CoV-2 viruses that hijack the endocytosis of TFRC to enter cells. The chain is Transferrin receptor protein 1 (TFRC) from Homo sapiens (Human).